The following is a 92-amino-acid chain: UPF0235 protein PYRAB05010 (92 aa).

Belongs to the UPF0235 family.

The protein is UPF0235 protein PYRAB05010 of Pyrococcus abyssi (strain GE5 / Orsay).